We begin with the raw amino-acid sequence, 98 residues long: Large ribosomal subunit protein uL23 (98 aa).

Belongs to the universal ribosomal protein uL23 family. Part of the 50S ribosomal subunit. Contacts protein L29, and trigger factor when it is bound to the ribosome.

Its function is as follows. One of the early assembly proteins it binds 23S rRNA. One of the proteins that surrounds the polypeptide exit tunnel on the outside of the ribosome. Forms the main docking site for trigger factor binding to the ribosome. This chain is Large ribosomal subunit protein uL23, found in Streptococcus equi subsp. equi (strain 4047).